The chain runs to 669 residues: DNA ligase (669 aa).

NAD(+) contacts are provided by residues 31–35, 80–81, and E112; these read DAEYD and SL. The N6-AMP-lysine intermediate role is filled by K114. R135, E172, K289, and K313 together coordinate NAD(+). C407, C410, C425, and C431 together coordinate Zn(2+). In terms of domain architecture, BRCT spans 591–669; that stretch reads SVPQPLADKV…EEQLIEILNN (79 aa).

It belongs to the NAD-dependent DNA ligase family. LigA subfamily. The cofactor is Mg(2+). It depends on Mn(2+) as a cofactor.

It carries out the reaction NAD(+) + (deoxyribonucleotide)n-3'-hydroxyl + 5'-phospho-(deoxyribonucleotide)m = (deoxyribonucleotide)n+m + AMP + beta-nicotinamide D-nucleotide.. Functionally, DNA ligase that catalyzes the formation of phosphodiester linkages between 5'-phosphoryl and 3'-hydroxyl groups in double-stranded DNA using NAD as a coenzyme and as the energy source for the reaction. It is essential for DNA replication and repair of damaged DNA. This is DNA ligase from Aliivibrio salmonicida (strain LFI1238) (Vibrio salmonicida (strain LFI1238)).